The chain runs to 203 residues: Suppressor/enhancer of lin-12 protein 9 (203 aa).

The first 18 residues, 1–18 (MNSLTWILAVLFVTPAAS), serve as a signal peptide directing secretion. Topologically, residues 19-170 (YFIHVDANEE…RNINENTNSR (152 aa)) are lumenal. Residues 28–110 (EQCFFDRLTS…PKAVMFTVEI (83 aa)) form the GOLD domain. A helical membrane pass occupies residues 171–191 (VVMWAAFEAFVLVGMTVGQIF). Residues 192-203 (YLKRFFEVRTMV) are Cytoplasmic-facing.

It belongs to the EMP24/GP25L family.

It localises to the cytoplasmic vesicle membrane. The protein localises to the cytoplasmic vesicle. Its subcellular location is the COPI-coated vesicle membrane. It is found in the golgi apparatus membrane. Functionally, may have a role in the negative regulation of lin-12 and glp-1 transport to the cell surface. May also have a role in a quality control mechanism for endoplasmic reticulum-Golgi transport; the budding of coatomer-coated and other species of coated vesicles, could bind cargo molecules to collect them into budding vesicles. Involved in regulating the expression of proteasomal subunits such as rpt-3 in order to confer resistance to proteasomal dysfunction. This is Suppressor/enhancer of lin-12 protein 9 (sel-9) from Caenorhabditis elegans.